We begin with the raw amino-acid sequence, 275 residues long: Phage-like element PBSX protein XkdF (275 aa).

The tract at residues 247–275 is disordered; the sequence is KARGASKQTADDTGGNTEQVKKSIWSGLL.

This sequence to B.subtilis YqbD.

In Bacillus subtilis (strain 168), this protein is Phage-like element PBSX protein XkdF (xkdF).